A 501-amino-acid polypeptide reads, in one-letter code: 2-phosphoxylose phosphatase 1 (501 aa).

Topologically, residues 1–6 are cytoplasmic; sequence MLLRNR. A helical; Signal-anchor for type II membrane protein transmembrane segment spans residues 7–27; that stretch reads FLLLLALAGLLAFLSLSLQFF. Residues 28–501 lie on the Lumenal side of the membrane; it reads SRWLPVSLQL…YYDACHQRLF (474 aa). His-120 acts as the Nucleophile in catalysis. N-linked (GlcNAc...) asparagine glycans are attached at residues Asn-328 and Asn-377. Asp-402 functions as the Proton donor in the catalytic mechanism. The N-linked (GlcNAc...) asparagine glycan is linked to Asn-488.

It belongs to the histidine acid phosphatase family.

The protein localises to the golgi apparatus membrane. The catalysed reaction is 3-O-[beta-D-GlcA-(1-&gt;3)-beta-D-Gal-(1-&gt;3)-beta-D-Gal-(1-&gt;4)-beta-D-2-O-P-Xyl]-L-seryl-[protein] + H2O = 3-O-(beta-D-GlcA-(1-&gt;3)-beta-D-Gal-(1-&gt;3)-beta-D-Gal-(1-&gt;4)-beta-D-Xyl)-L-seryl-[protein] + phosphate. Its function is as follows. Responsible for the 2-O-dephosphorylation of xylose in the glycosaminoglycan-protein linkage region of proteoglycans thereby regulating the amount of mature glycosaminoglycan (GAG) chains. Sulfated glycosaminoglycans (GAGs), including heparan sulfate and chondroitin sulfate, are synthesized on the so-called common GAG-protein linkage region (GlcUAbeta1-3Galbeta1-3Galbeta1-4Xylbeta1-O-Ser) of core proteins, which is formed by the stepwise addition of monosaccharide residues by the respective specific glycosyltransferases. Xylose 2-O-dephosphorylation during completion of linkage region formation is a prerequisite for the initiation and efficient elongation of the repeating disaccharide region of GAG chains. This chain is 2-phosphoxylose phosphatase 1, found in Xenopus tropicalis (Western clawed frog).